Here is a 651-residue protein sequence, read N- to C-terminus: Choline transporter-like protein 1 (651 aa).

The Cytoplasmic portion of the chain corresponds to 1 to 25 (MGCCGSTQNSKRDWRPLEEHSCTDI). A helical transmembrane segment spans residues 26–46 (PWLLLFILFCVGMGFICGFSI). Residues 47–208 (ATGAASRLVF…RLISGVMTSK (162 aa)) are Extracellular-facing. 2 N-linked (GlcNAc...) asparagine glycosylation sites follow: Asn131 and Asn176. A helical membrane pass occupies residues 209 to 229 (EIIMGLCLLSLVLSMILMVII). Topologically, residues 230–234 (RYISR) are cytoplasmic. The helical transmembrane segment at 235–255 (VLVWIITILVVLGSLGGTGVL) threads the bilayer. Topologically, residues 256–284 (WWLYADNKKSLNENLPPDQLQVSKDNLQA) are extracellular. A helical membrane pass occupies residues 285 to 305 (LLVYAIAATVFTVILLLMMLI). Residues 306 to 311 (MRKRVA) are Cytoplasmic-facing. A helical transmembrane segment spans residues 312–332 (LTIALFNVAGKVFIHLPLLVF). Residues 333-334 (QP) are Extracellular-facing. A helical membrane pass occupies residues 335–355 (FWTFFALLLFWVYWVMVLLFL). Residues 356-376 (GTAGDPFTNEQGFVEFRINGP) are Cytoplasmic-facing. The chain crosses the membrane as a helical span at residues 377–397 (LQYMWWYHLVGLIWISEFILA). Residues 398-438 (CQQMTIAGAVVTYYFTRNKNDLPFTPILASVNRLIRYHLGT) are Extracellular-facing. The helical transmembrane segment at 439-459 (VAKGAFIITLVKIPRMILMYI) threads the bilayer. Topologically, residues 460-533 (HSQLKGKENA…RVAAINTVGD (74 aa)) are cytoplasmic. A helical membrane pass occupies residues 534 to 554 (FMLFLGKILIVSCTGLAGIML). Residues 555 to 562 (LNYQRDYT) are Extracellular-facing. Residues 563–583 (VWVLPLIIVCLFAFLVAHCFL) form a helical membrane-spanning segment. The Cytoplasmic portion of the chain corresponds to 584–651 (SIYEMVVDVL…KPMASGTSTA (68 aa)). Positions 629-651 (LKEPGSTAEGRELKPMASGTSTA) are disordered.

This sequence belongs to the CTL (choline transporter-like) family.

It localises to the cell membrane. Its subcellular location is the mitochondrion outer membrane. The catalysed reaction is choline(out) + n H(+)(in) = choline(in) + n H(+)(out). It catalyses the reaction ethanolamine(out) + n H(+)(in) = ethanolamine(in) + n H(+)(out). Functionally, choline/H+ antiporter. Also acts as a high-affinity ethanolamine/H+ antiporter, regulating the supply of extracellular ethanolamine (Etn) for the CDP-Etn pathway, redistribute intracellular Etn and balance the CDP-Cho and CDP-Etn arms of the Kennedy pathway. Involved in membrane synthesis and myelin production. The sequence is that of Choline transporter-like protein 1 (slc44a1) from Xenopus laevis (African clawed frog).